The chain runs to 132 residues: MAAPKSAVRKPRRKDKKNIAVGQAHIKSTFNNTIVSITDPTGAVISWASSGVVGYNGSRKSTPFAAQLAAESAARQAQEHGMKKVDVFVKGPGSGRETAIRSLQAAGLEVGSINDVTPQAHNGCRPPKRRRV.

Residues 1 to 21 form a disordered region; the sequence is MAAPKSAVRKPRRKDKKNIAV. A compositionally biased stretch (basic residues) spans 7–16; that stretch reads AVRKPRRKDK.

This sequence belongs to the universal ribosomal protein uS11 family. In terms of assembly, part of the 30S ribosomal subunit. Interacts with proteins S7 and S18. Binds to IF-3.

Its function is as follows. Located on the platform of the 30S subunit, it bridges several disparate RNA helices of the 16S rRNA. Forms part of the Shine-Dalgarno cleft in the 70S ribosome. This is Small ribosomal subunit protein uS11 from Clavibacter sepedonicus (Clavibacter michiganensis subsp. sepedonicus).